The chain runs to 346 residues: Putative aquaporin-7B (346 aa).

Residues 1-40 (MVQASGHRRSTRGSKMVSWSVIAKIQEIWCEEDERKMVRE) are Cytoplasmic-facing. Residues 41 to 58 (FLAEFMSTYVMMVFGLGS) form a helical membrane-spanning segment. Over 59–71 (VAHMVLNKTYGSY) the chain is Extracellular. The helical transmembrane segment at 72 to 89 (LGVNLGFGFGVTMGVHVA) threads the bilayer. Over 90 to 93 (GRIS) the chain is Cytoplasmic. The discontinuously helical intramembrane region spans 94–107 (GAHMNAAVTFTNCA). The NPA 1 signature appears at 98–100 (NAA). The Cytoplasmic segment spans residues 108–115 (LGRVPWRK). The chain crosses the membrane as a helical span at residues 116 to 136 (FPVHVLGQFLGSFLAAATIYS). The Extracellular segment spans residues 137–174 (LFYTAILHFSGGELMVTGPFATAGIFATYLPDHMTLWR). The helical transmembrane segment at 175 to 192 (GFLNEEWLTRMLQLCLFT) threads the bilayer. Residues 193 to 204 (ITDQENNPALPG) are Cytoplasmic-facing. Residues 205-221 (THALVISILVVIIRVSH) traverse the membrane as a helical segment. Residues 222–225 (GINT) lie on the Extracellular side of the membrane. Positions 226–239 (GYAINPSRDPPPSI) form an intramembrane region, discontinuously helical. Positions 230–232 (NPS) match the NPA 2 motif. Topologically, residues 240-257 (FTFIAGWGKQVFSDGENW) are extracellular. The chain crosses the membrane as a helical span at residues 258-279 (WWVPVVAPLLGASLGGIIYLVF). The Cytoplasmic segment spans residues 280–346 (IGSTIPREPL…LHESMALEHF (67 aa)).

It belongs to the MIP/aquaporin (TC 1.A.8) family. In terms of assembly, homotetramer; each monomer provides an independent glycerol/water pore.

Its subcellular location is the membrane. It carries out the reaction glycerol(in) = glycerol(out). The enzyme catalyses H2O(in) = H2O(out). In terms of biological role, aquaglyceroporins form homotetrameric transmembrane channels, with each monomer independently mediating glycerol and water transport across the plasma membrane along their osmotic gradient. The chain is Putative aquaporin-7B from Homo sapiens (Human).